The primary structure comprises 308 residues: Taste receptor type 2 member 41 (308 aa).

The Extracellular segment spans residues Met1 to Val7. The chain crosses the membrane as a helical span at residues Phe8 to Val28. Residues Leu29–Cys60 are Cytoplasmic-facing. A helical transmembrane segment spans residues Val61–Ala81. The Extracellular segment spans residues Arg82–His88. The helical transmembrane segment at Trp89–Ile109 threads the bilayer. Topologically, residues Lys110–Ala128 are cytoplasmic. The chain crosses the membrane as a helical span at residues Leu129–Phe149. Over Trp150–Lys186 the chain is Extracellular. N-linked (GlcNAc...) asparagine glycosylation is found at Asn152 and Asn167. Residues Val187 to Ser207 form a helical membrane-spanning segment. The Cytoplasmic portion of the chain corresponds to Leu208 to Ser239. Residues Phe240–Ser260 form a helical membrane-spanning segment. Residues Ser261 to Val264 lie on the Extracellular side of the membrane. The chain crosses the membrane as a helical span at residues Trp265–Ile285. Residues Thr286–Ala308 are Cytoplasmic-facing.

It belongs to the G-protein coupled receptor T2R family. In terms of tissue distribution, expressed in subsets of taste receptor cells of the tongue and palate epithelium and exclusively in gustducin-positive cells.

It is found in the membrane. Functionally, receptor that may play a role in the perception of bitterness and is gustducin-linked. May play a role in sensing the chemical composition of the gastrointestinal content. The activity of this receptor may stimulate alpha gustducin, mediate PLC-beta-2 activation and lead to the gating of TRPM5. This Mus musculus (Mouse) protein is Taste receptor type 2 member 41 (Tas2r41).